Consider the following 611-residue polypeptide: Dihydroxy-acid dehydratase (611 aa).

D81 is a Mg(2+) binding site. C122 contacts [2Fe-2S] cluster. Mg(2+) contacts are provided by D123 and K124. The residue at position 124 (K124) is an N6-carboxylysine. C195 is a [2Fe-2S] cluster binding site. E491 provides a ligand contact to Mg(2+). S517 (proton acceptor) is an active-site residue.

Belongs to the IlvD/Edd family. In terms of assembly, homodimer. [2Fe-2S] cluster serves as cofactor. Mg(2+) is required as a cofactor.

It carries out the reaction (2R)-2,3-dihydroxy-3-methylbutanoate = 3-methyl-2-oxobutanoate + H2O. It catalyses the reaction (2R,3R)-2,3-dihydroxy-3-methylpentanoate = (S)-3-methyl-2-oxopentanoate + H2O. It participates in amino-acid biosynthesis; L-isoleucine biosynthesis; L-isoleucine from 2-oxobutanoate: step 3/4. Its pathway is amino-acid biosynthesis; L-valine biosynthesis; L-valine from pyruvate: step 3/4. Its function is as follows. Functions in the biosynthesis of branched-chain amino acids. Catalyzes the dehydration of (2R,3R)-2,3-dihydroxy-3-methylpentanoate (2,3-dihydroxy-3-methylvalerate) into 2-oxo-3-methylpentanoate (2-oxo-3-methylvalerate) and of (2R)-2,3-dihydroxy-3-methylbutanoate (2,3-dihydroxyisovalerate) into 2-oxo-3-methylbutanoate (2-oxoisovalerate), the penultimate precursor to L-isoleucine and L-valine, respectively. The polypeptide is Dihydroxy-acid dehydratase (Agrobacterium fabrum (strain C58 / ATCC 33970) (Agrobacterium tumefaciens (strain C58))).